The sequence spans 686 residues: UvrABC system protein C (686 aa).

Basic and acidic residues predominate over residues 1 to 14 (MVHDSTDDPDDTRV). A disordered region spans residues 1–48 (MVHDSTDDPDDTRVRKSRRGTALDAPPQETAPPDLDPATTGGDDEDDA). The 80-residue stretch at 81–160 (TSPGVYRMLN…IKQLRPRFNV (80 aa)) folds into the GIY-YIG domain. Residues 270–305 (HAVKQELAGEMEKAANELEFETAALYRDRLAALSAI) form the UVR domain.

This sequence belongs to the UvrC family. Interacts with UvrB in an incision complex.

Its subcellular location is the cytoplasm. Its function is as follows. The UvrABC repair system catalyzes the recognition and processing of DNA lesions. UvrC both incises the 5' and 3' sides of the lesion. The N-terminal half is responsible for the 3' incision and the C-terminal half is responsible for the 5' incision. This Bradyrhizobium diazoefficiens (strain JCM 10833 / BCRC 13528 / IAM 13628 / NBRC 14792 / USDA 110) protein is UvrABC system protein C.